We begin with the raw amino-acid sequence, 310 residues long: tRNA uridine(34) hydroxylase (310 aa).

Positions 127 to 225 constitute a Rhodanese domain; the sequence is KNQNTIVIDT…YLDEISKEEN (99 aa). The active-site Cysteine persulfide intermediate is the Cys-185.

This sequence belongs to the TrhO family.

It catalyses the reaction uridine(34) in tRNA + AH2 + O2 = 5-hydroxyuridine(34) in tRNA + A + H2O. In terms of biological role, catalyzes oxygen-dependent 5-hydroxyuridine (ho5U) modification at position 34 in tRNAs. This chain is tRNA uridine(34) hydroxylase, found in Prochlorococcus marinus (strain MIT 9215).